Reading from the N-terminus, the 655-residue chain is Protein-glucosylgalactosylhydroxylysine glucosidase (655 aa).

258 to 259 (WD) provides a ligand contact to substrate. E388 acts as the Proton donor in catalysis. Residue 456 to 457 (KQ) coordinates substrate.

This sequence belongs to the glycosyl hydrolase 65 family.

It carries out the reaction (5R)-5-O-[alpha-D-glucosyl-(1-&gt;2)-beta-D-galactosyl]-5-hydroxy-L-lysyl-[collagen] + H2O = (5R)-5-O-(beta-D-galactosyl)-5-hydroxy-L-lysyl-[collagen] + D-glucose. Its function is as follows. Catalyzes the hydrolysis of glucose from the disaccharide unit linked to hydroxylysine residues of collagen and collagen-like proteins. This Danio rerio (Zebrafish) protein is Protein-glucosylgalactosylhydroxylysine glucosidase.